Here is a 372-residue protein sequence, read N- to C-terminus: Tyrosine--tRNA ligase 1 (372 aa).

Positions 37, 169, 173, 176, and 191 each coordinate L-tyrosine. Residues 246–250 (KMSKS) carry the 'KMSKS' region motif. Lys-249 is a binding site for ATP.

Belongs to the class-I aminoacyl-tRNA synthetase family. TyrS type 4 subfamily. As to quaternary structure, homodimer.

Its subcellular location is the cytoplasm. It catalyses the reaction tRNA(Tyr) + L-tyrosine + ATP = L-tyrosyl-tRNA(Tyr) + AMP + diphosphate + H(+). Functionally, catalyzes the attachment of tyrosine to tRNA(Tyr) in a two-step reaction: tyrosine is first activated by ATP to form Tyr-AMP and then transferred to the acceptor end of tRNA(Tyr). The chain is Tyrosine--tRNA ligase 1 from Pyrobaculum aerophilum (strain ATCC 51768 / DSM 7523 / JCM 9630 / CIP 104966 / NBRC 100827 / IM2).